The following is a 332-amino-acid chain: Diaminopimelate epimerase (332 aa).

2 residues coordinate substrate: asparagine 13 and asparagine 73. Residue cysteine 82 is the Proton donor of the active site. Substrate is bound by residues 83 to 84, asparagine 172, asparagine 209, and 227 to 228; these read GN and ER. Residue cysteine 236 is the Proton acceptor of the active site. 237–238 is a binding site for substrate; the sequence is GT.

Belongs to the diaminopimelate epimerase family. In terms of assembly, homodimer.

The protein resides in the cytoplasm. The catalysed reaction is (2S,6S)-2,6-diaminopimelate = meso-2,6-diaminopimelate. Its pathway is amino-acid biosynthesis; L-lysine biosynthesis via DAP pathway; DL-2,6-diaminopimelate from LL-2,6-diaminopimelate: step 1/1. Its function is as follows. Catalyzes the stereoinversion of LL-2,6-diaminopimelate (L,L-DAP) to meso-diaminopimelate (meso-DAP), a precursor of L-lysine and an essential component of the bacterial peptidoglycan. The polypeptide is Diaminopimelate epimerase (Lactiplantibacillus plantarum (strain ATCC BAA-793 / NCIMB 8826 / WCFS1) (Lactobacillus plantarum)).